The following is a 66-amino-acid chain: MAKGKDVRVTVILECTNCVRTGLNKESRGVSRYITQKNRHNTPSRLELRKFCPYCYKHTIHGEIKK.

The protein belongs to the bacterial ribosomal protein bL33 family.

The protein resides in the plastid. The protein localises to the chloroplast. This is Large ribosomal subunit protein bL33c from Eucalyptus globulus subsp. globulus (Tasmanian blue gum).